A 218-amino-acid chain; its full sequence is UPF0329 protein ECU10_1860 (218 aa).

This sequence belongs to the UPF0329 family.

The protein is UPF0329 protein ECU10_1860 of Encephalitozoon cuniculi (strain GB-M1) (Microsporidian parasite).